Reading from the N-terminus, the 436-residue chain is Serine--tRNA ligase (436 aa).

239–241 (TAE) contacts L-serine. 270 to 272 (RLE) is an ATP binding site. An L-serine-binding site is contributed by glutamate 293. 357–360 (EISS) is a binding site for ATP. Serine 393 contributes to the L-serine binding site.

The protein belongs to the class-II aminoacyl-tRNA synthetase family. Type-1 seryl-tRNA synthetase subfamily. Homodimer. The tRNA molecule binds across the dimer.

It is found in the cytoplasm. The catalysed reaction is tRNA(Ser) + L-serine + ATP = L-seryl-tRNA(Ser) + AMP + diphosphate + H(+). It catalyses the reaction tRNA(Sec) + L-serine + ATP = L-seryl-tRNA(Sec) + AMP + diphosphate + H(+). It functions in the pathway aminoacyl-tRNA biosynthesis; selenocysteinyl-tRNA(Sec) biosynthesis; L-seryl-tRNA(Sec) from L-serine and tRNA(Sec): step 1/1. Catalyzes the attachment of serine to tRNA(Ser). Is also able to aminoacylate tRNA(Sec) with serine, to form the misacylated tRNA L-seryl-tRNA(Sec), which will be further converted into selenocysteinyl-tRNA(Sec). The polypeptide is Serine--tRNA ligase (Blochmanniella floridana).